Consider the following 232-residue polypeptide: Large ribosomal subunit protein uL1 (232 aa).

This sequence belongs to the universal ribosomal protein uL1 family. In terms of assembly, part of the 50S ribosomal subunit.

In terms of biological role, binds directly to 23S rRNA. The L1 stalk is quite mobile in the ribosome, and is involved in E site tRNA release. Its function is as follows. Protein L1 is also a translational repressor protein, it controls the translation of the L11 operon by binding to its mRNA. This chain is Large ribosomal subunit protein uL1, found in Christiangramia forsetii (strain DSM 17595 / CGMCC 1.15422 / KT0803) (Gramella forsetii).